A 376-amino-acid polypeptide reads, in one-letter code: N-acetyldiaminopimelate deacetylase (376 aa).

Asp69 is a catalytic residue. Residue Glu128 is the Proton acceptor of the active site.

This sequence belongs to the peptidase M20A family. N-acetyldiaminopimelate deacetylase subfamily.

It carries out the reaction N-acetyl-(2S,6S)-2,6-diaminopimelate + H2O = (2S,6S)-2,6-diaminopimelate + acetate. The protein operates within amino-acid biosynthesis; L-lysine biosynthesis via DAP pathway; LL-2,6-diaminopimelate from (S)-tetrahydrodipicolinate (acetylase route): step 3/3. Catalyzes the conversion of N-acetyl-diaminopimelate to diaminopimelate and acetate. The chain is N-acetyldiaminopimelate deacetylase from Streptococcus pneumoniae (strain JJA).